Here is a 65-residue protein sequence, read N- to C-terminus: Large ribosomal subunit protein bL28 (65 aa).

The segment at 1 to 26 (MARRDALTGKSALSGQSRSHALNATK) is disordered. The span at 11-22 (SALSGQSRSHAL) shows a compositional bias: polar residues.

Belongs to the bacterial ribosomal protein bL28 family.

The polypeptide is Large ribosomal subunit protein bL28 (Mycoplasma mycoides subsp. mycoides SC (strain CCUG 32753 / NCTC 10114 / PG1)).